The following is a 394-amino-acid chain: Proliferation-associated protein 2G4 (394 aa).

Ser-2 bears the N-acetylserine mark. Ser-2 is modified (phosphoserine). Positions 2–48 (SGEDEQQEQTIAEDLVVTKYKMGGDIANRVLRSLVEASSSGVSVLSL) are necessary for nucleolar localization. An RNA-binding region spans residues 46 to 54 (LSLCEKGDA). Lys-298 participates in a covalent cross-link: Glycyl lysine isopeptide (Lys-Gly) (interchain with G-Cter in SUMO2). Positions 301–394 (LLQPFNVLYE…ETLEENEAGD (94 aa)) are necessary for nucleolar localization. Ser-335 carries the phosphoserine modification. Residues 358 to 394 (LQSSASRKTQKKKKKKASKTAENATSGETLEENEAGD) are disordered. Ser-361 carries the post-translational modification Phosphoserine; by PKC/PRKCD. The interaction with RNA stretch occupies residues 361–375 (SASRKTQKKKKKKAS). Positions 365–375 (KTQKKKKKKAS) are enriched in basic residues. Thr-366 and Thr-386 each carry phosphothreonine.

This sequence belongs to the peptidase M24 family. As to quaternary structure, isoform 2 interacts with the cytoplasmic domain of non-phosphorylated ERBB3; the interaction requires PKC activity. Interacts with AR. Treatment with HRG leads to dissociation from ERBB3 and increases association with AR. Interacts with NCL/nucleolin. Component of a ribonucleoprotein complex containing at least PA2G4, NCL, TOP1, PABPC2, RPLP0, acetylated histone H1 (HIST1H1A or H1F1), histone H1 2/4, RPL4, RPL8, RPL15, RPL18, RPL18A, RPL21, RPL11, RPL12, RPL28, RPL27, RPLP2 and RPL24. Interacts with HDAC2. Interacts with RB1; the interaction is enhanced upon PA2G4 dephosphorylation. Interacts with AKT1. Isoform 1 and isoform 2 interact with RNF20. Isoform 2 interacts with HUWE1. Interacts with DNAJC21. In terms of processing, phosphorylated on serine and threonine residues. Phosphorylation is enhanced by HRG treatment. Basal phosphorylation is PKC-dependent and HRG-induced phosphorylation is predominantly PKC-independent. Phosphorylation at Ser-361 by PKC/PRKCD regulates its nucleolar localization. In cancer cells, isoform 2 is polyubiquitinated leading to its proteasomal degradation and phosphorylation by PKC/PRKCD enhances polyubiquitination. As to expression, isoform 2 is undetectable whereas isoform 1 is strongly expressed in cancer cells (at protein level). Isoform 1 and isoform 2 are widely expressed, including heart, brain, lung, pancreas, skeletal muscle, kidney, placenta and liver.

The protein localises to the cytoplasm. The protein resides in the nucleus. It is found in the nucleolus. Functionally, may play a role in a ERBB3-regulated signal transduction pathway. Seems be involved in growth regulation. Acts a corepressor of the androgen receptor (AR) and is regulated by the ERBB3 ligand neuregulin-1/heregulin (HRG). Inhibits transcription of some E2F1-regulated promoters, probably by recruiting histone acetylase (HAT) activity. Binds RNA. Associates with 28S, 18S and 5.8S mature rRNAs, several rRNA precursors and probably U3 small nucleolar RNA. May be involved in regulation of intermediate and late steps of rRNA processing. May be involved in ribosome assembly. Mediates cap-independent translation of specific viral IRESs (internal ribosomal entry site). Regulates cell proliferation, differentiation, and survival. Isoform 1 suppresses apoptosis whereas isoform 2 promotes cell differentiation. This is Proliferation-associated protein 2G4 (PA2G4) from Homo sapiens (Human).